The following is a 373-amino-acid chain: Glutamine synthetase (373 aa).

Alanine 2 carries the N-acetylalanine modification. The interval 2–25 is required for glutamine-induced ubiquitination by CRL4(CRBN) and proteasomal degradation; the sequence is ATSASSHLNKGIKQVYMALPQGDK. Residues lysine 11 and lysine 14 each carry the N6-acetyllysine modification. One can recognise a GS beta-grasp domain in the interval 26 to 106; it reads VQAMYIWIDG…VFCEVFKYNR (81 aa). Tyrosine 104 is modified (phosphotyrosine). The GS catalytic domain occupies 113 to 373; that stretch reads LRHTCKRIMD…TGDEPFQYKN (261 aa). Glutamate 134 is a binding site for ATP. Mn(2+) is bound by residues glutamate 134, glutamate 136, glutamate 196, and glutamate 203. 203–208 contributes to the ATP binding site; the sequence is EFQIGP. 246–247 is a binding site for L-glutamate; the sequence is NW. Histidine 253 lines the Mn(2+) pocket. ATP-binding positions include 255–257, arginine 319, and arginine 324; that span reads NFS. L-glutamate is bound at residue arginine 319. ADP is bound at residue 336–338; sequence YFE. Glutamate 338 contributes to the Mn(2+) binding site. Position 340 (arginine 340) interacts with L-glutamate. Serine 343 is modified (phosphoserine).

The protein belongs to the glutamine synthetase family. In terms of assembly, decamer; composed of two pentamers. Interacts with PALMD. Interacts with RHOJ. Interacts with BEST2; this interaction tethers a fraction of GLUL to the membrane, causing a decrease of cytosolic glutamine synthase (GS) activity and inhibits the chloride channel activity of BEST2 by affecting the gating at the aperture in the absence of intracellular glutamate. Mg(2+) is required as a cofactor. Mn(2+) serves as cofactor. Palmitoylated; undergoes autopalmitoylation. In terms of processing, acetylated by EP300/p300; acetylation is stimulated by increased glutamine levels and promotes ubiquitin-mediated proteasomal degradation. Post-translationally, ubiquitinated by ZNRF1. Ubiquitinated by the DCX (DDB1-CUL4-X-box) E3 ubiquitin-protein ligase complex called CRL4(CRBN), leading to proteasomal degradation.

The protein resides in the cytoplasm. It is found in the cytosol. It localises to the microsome. Its subcellular location is the mitochondrion. The protein localises to the cell membrane. The catalysed reaction is L-glutamate + NH4(+) + ATP = L-glutamine + ADP + phosphate + H(+). It carries out the reaction L-cysteinyl-[protein] + hexadecanoyl-CoA = S-hexadecanoyl-L-cysteinyl-[protein] + CoA. Glutamine synthetase activity is inhibited by methionine sulfoximine (MSO). In terms of biological role, glutamine synthetase that catalyzes the ATP-dependent conversion of glutamate and ammonia to glutamine. Its role depends on tissue localization: in the brain, it regulates the levels of toxic ammonia and converts neurotoxic glutamate to harmless glutamine, whereas in the liver, it is one of the enzymes responsible for the removal of ammonia. Plays a key role in ammonium detoxification during erythropoiesis: the glutamine synthetase activity is required to remove ammonium generated by porphobilinogen deaminase (HMBS) during heme biosynthesis to prevent ammonium accumulation and oxidative stress. Essential for proliferation of fetal skin fibroblasts. Independently of its glutamine synthetase activity, required for endothelial cell migration during vascular development. Involved in angiogenesis by regulating membrane localization and activation of the GTPase RHOJ, possibly by promoting RHOJ palmitoylation. May act as a palmitoyltransferase for RHOJ: able to autopalmitoylate and then transfer the palmitoyl group to RHOJ. Plays a role in ribosomal 40S subunit biogenesis. Through the interaction with BEST2, inhibits BEST2 channel activity by affecting the gating at the aperture in the absence of intracellular L-glutamate, but sensitizes BEST2 to intracellular L-glutamate, which promotes the opening of BEST2 and thus relieves its inhibitory effect on BEST2. In Bos taurus (Bovine), this protein is Glutamine synthetase.